The primary structure comprises 219 residues: Ribonuclease HII (219 aa).

Positions 30–219 constitute an RNase H type-2 domain; sequence RVIAGIDEAG…VREHVTCPSS (190 aa). Residues aspartate 36, glutamate 37, and aspartate 128 each coordinate a divalent metal cation.

The protein belongs to the RNase HII family. Requires Mn(2+) as cofactor. Mg(2+) is required as a cofactor.

The protein resides in the cytoplasm. It catalyses the reaction Endonucleolytic cleavage to 5'-phosphomonoester.. Functionally, endonuclease that specifically degrades the RNA of RNA-DNA hybrids. This chain is Ribonuclease HII, found in Pelobacter propionicus (strain DSM 2379 / NBRC 103807 / OttBd1).